A 234-amino-acid polypeptide reads, in one-letter code: Octanoyltransferase (234 aa).

In terms of domain architecture, BPL/LPL catalytic spans 35–221; that stretch reads DGAPELVWFL…AFQQVFASPL (187 aa). Residues 74 to 81, 150 to 152, and 163 to 165 contribute to the substrate site; these read RGGQYTYH, AIG, and GIS. Cys-181 (acyl-thioester intermediate) is an active-site residue.

This sequence belongs to the LipB family.

Its subcellular location is the cytoplasm. It catalyses the reaction octanoyl-[ACP] + L-lysyl-[protein] = N(6)-octanoyl-L-lysyl-[protein] + holo-[ACP] + H(+). The protein operates within protein modification; protein lipoylation via endogenous pathway; protein N(6)-(lipoyl)lysine from octanoyl-[acyl-carrier-protein]: step 1/2. In terms of biological role, catalyzes the transfer of endogenously produced octanoic acid from octanoyl-acyl-carrier-protein onto the lipoyl domains of lipoate-dependent enzymes. Lipoyl-ACP can also act as a substrate although octanoyl-ACP is likely to be the physiological substrate. This chain is Octanoyltransferase, found in Hyphomonas neptunium (strain ATCC 15444).